Reading from the N-terminus, the 1065-residue chain is N-terminal acetyltransferase B complex auxiliary subunit NAA25 (1065 aa).

A TPR repeat occupies 294 to 327; it reads VDKLRIQGRLLARANDYSAAVDVYKKILELSPDD.

Belongs to the MDM20/NAA25 family. As to expression, ubiquitously expressed, with a higher expression in vascular bundles, hydathodes, leaf primordia and the base of the trichomes.

It is found in the cytoplasm. Its function is as follows. Auxiliary subunit of the NatB N-alpha-acetyltransferase complex. Required for flowering time regulation and for vegetative and reproductive plant development. The polypeptide is N-terminal acetyltransferase B complex auxiliary subunit NAA25 (Arabidopsis thaliana (Mouse-ear cress)).